A 699-amino-acid chain; its full sequence is Osmotic avoidance abnormal protein 3 (699 aa).

The region spanning 4–327 (SVRVAVRCRP…LRYANRAKNI (324 aa)) is the Kinesin motor domain. An ATP-binding site is contributed by 87–94 (GQTGSGKT). Residues 339 to 523 (DALLREYQEE…EIEDLHGEFE (185 aa)) are a coiled coil.

Belongs to the TRAFAC class myosin-kinesin ATPase superfamily. Kinesin family. Kinesin II subfamily. Expressed in an exclusive set of 26 chemosensory neurons whose dendritic endings are exposed to the external environment; six IL2 neurons of the inner labial sensilla, 8 pairs of amphid neurons in the head, and 2 pairs of phasmid neurons in the tail.

Its subcellular location is the cytoplasm. It is found in the cytoskeleton. It localises to the cell projection. The protein resides in the cilium. The protein localises to the cilium axoneme. Its subcellular location is the cilium basal body. Its function is as follows. Kinesin motor protein which is required for the anterograde intraflagellar transport (IFT) along the middle segment of the sensory neuron cilia together with the kinesin II motor complex (composed of klp-11, klp-20 and kap-1) and on its own, is required for IFT along the distal segment. In addition, regulates the length of cilia. May have a role during neurogenesis and axonal transport. The sequence is that of Osmotic avoidance abnormal protein 3 from Caenorhabditis elegans.